Reading from the N-terminus, the 466-residue chain is Glycine--tRNA ligase (466 aa).

Substrate-binding residues include Arg105 and Glu168. Residues 200–202 (RNE), 210–215 (FRTREF), 287–288 (EL), and 331–334 (GLTR) each bind ATP. 215-219 (FEQME) contacts substrate. A substrate-binding site is contributed by 327 to 331 (EPAAG).

The protein belongs to the class-II aminoacyl-tRNA synthetase family. Homodimer.

It is found in the cytoplasm. It catalyses the reaction tRNA(Gly) + glycine + ATP = glycyl-tRNA(Gly) + AMP + diphosphate. Functionally, catalyzes the attachment of glycine to tRNA(Gly). This is Glycine--tRNA ligase from Nocardia farcinica (strain IFM 10152).